We begin with the raw amino-acid sequence, 314 residues long: ASAAVSAAPTEKEFPKTHSDVSSEQQNLKGQKGSNGGSMKLHTTDQSTFDIWRKKLQDLEFSSESPSKETSDSPWRSDILIDENCLLSPLAGEDDSFLLEGSSNEDCKPLLLPDAKPKIKDNGDLILPSPNSVPLPQVKTEKEDFIELCTPGVIKQEKLGPVYCQASFPGANIIGNKMSAISVHGVSTSGGQMYHYDMNTASLSQQQDQKPIFKVIPPIPVGSENWNRCQGSGDDSLTSLGTLNFSGRSVFSNGYSSPGMRPDVSSPPSSSSAATGPPPKLCLVCSDEASGCHYGVLTCGSCKVFFKRAVEGQH.

Positions 1–44 (ASAAVSAAPTEKEFPKTHSDVSSEQQNLKGQKGSNGGSMKLHTT) are disordered. The modulating stretch occupies residues 1 to 281 (ASAAVSAAPT…SAATGPPPKL (281 aa)). Residues 10-21 (TEKEFPKTHSDV) are compositionally biased toward basic and acidic residues. S65, S73, and S88 each carry phosphoserine. Residue K120 forms a Glycyl lysine isopeptide (Lys-Gly) (interchain with G-Cter in SUMO2) linkage. The residue at position 129 (S129) is a Phosphoserine. Residues K139 and K155 each participate in a glycyl lysine isopeptide (Lys-Gly) (interchain with G-Cter in SUMO); alternate cross-link. Residues K139 and K155 each participate in a glycyl lysine isopeptide (Lys-Gly) (interchain with G-Cter in SUMO2); alternate cross-link. Position 266 is a phosphoserine (S266). K280 is covalently cross-linked (Glycyl lysine isopeptide (Lys-Gly) (interchain with G-Cter in ubiquitin)). The NR C4-type zinc finger occupies 282 to 314 (CLVCSDEASGCHYGVLTCGSCKVFFKRAVEGQH). Positions 282–314 (CLVCSDEASGCHYGVLTCGSCKVFFKRAVEGQH) form a DNA-binding region, nuclear receptor.

This sequence belongs to the nuclear hormone receptor family. NR3 subfamily. Heteromultimeric cytoplasmic complex with HSP90AA1, HSPA1A/HSPA1B, and FKBP5 or another immunophilin such as PPID, STIP1, or the immunophilin homolog PPP5C. Upon ligand binding FKBP5 dissociates from the complex and FKBP4 takes its place, thereby linking the complex to dynein and mediating transport to the nucleus, where the complex dissociates. Probably forms a complex composed of chaperones HSP90 and HSP70, co-chaperones CDC37, PPP5C, TSC1 and client protein TSC2, CDK4, AKT, RAF1 and NR3C1; this complex does not contain co-chaperones STIP1/HOP and PTGES3/p23. Directly interacts with UNC45A. Binds to DNA as a homodimer, and as heterodimer with NR3C2 or the retinoid X receptor. Binds STAT5A and STAT5B homodimers and heterodimers. Interacts with NRIP1, POU2F1, POU2F2 and TRIM28. Interacts with several coactivator complexes, including the SMARCA4 complex, CREBBP/EP300, TADA2L (Ada complex) and p160 coactivators such as NCOA2 and NCOA6. Interaction with BAG1 inhibits transactivation. Interacts with HEXIM1 and TGFB1I1. Interacts with NCOA1. Interacts with NCOA3, SMARCA4, SMARCC1, SMARCD1, and SMARCE1. Interacts with CLOCK, CRY1 and CRY2 in a ligand-dependent fashion. Interacts with CIART. Interacts with RWDD3. Interacts with UBE2I/UBC9 and this interaction is enhanced in the presence of RWDD3. Interacts with GRIP1. Interacts with NR4A3 (via nuclear receptor DNA-binding domain), represses transcription activity of NR4A3 on the POMC promoter Nur response element (NurRE). Directly interacts with PNRC2 to attract and form a complex with UPF1 and DCP1A; the interaction leads to rapid mRNA degradation. Interacts with GSK3B. Interacts with FNIP1 and FNIP2. Interacts (via C-terminus) with HNRNPU (via C-terminus). Interacts with MCM3AP. Interacts (via domain NR LBD) with HSP90AA1 and HSP90AB1. In the absence of hormonal ligand, interacts with TACC1. Interacts (via NR LBD domain) with ZNF764 (via KRAB domain); the interaction regulates transcription factor activity of NR3C1 by directing its actions toward certain biologic pathways. Post-translationally, acetylation by CLOCK reduces its binding to glucocorticoid response elements and its transcriptional activity. Increased proteasome-mediated degradation in response to glucocorticoids. In terms of processing, phosphorylated in the absence of hormone; becomes hyperphosphorylated in the presence of glucocorticoid. The Ser-65, Ser-88 and Ser-266-phosphorylated forms are mainly cytoplasmic, and the Ser-73-phosphorylated form is nuclear. Phosphorylation at Ser-73 increases transcriptional activity. Phosphorylation at Ser-65, Ser-88 and Ser-266 decreases signaling capacity. Phosphorylation at Ser-266 may protect from glucocorticoid-induced apoptosis. Phosphorylation at Ser-65 and Ser-73 is not required in regulation of chromosome segregation. May be dephosphorylated by PPP5C, attenuates NR3C1 action. Post-translationally, ubiquitinated by UBR5, leading to its degradation: UBR5 specifically recognizes and binds ligand-bound NR3C1 when it is not associated with coactivators (NCOAs). In presence of NCOAs, the UBR5-degron is not accessible, preventing its ubiquitination and degradation. Sumoylation at Lys-139 and Lys-155 negatively regulates its transcriptional activity. Heat shock increases sumoylation in a RWDD3-dependent manner.

It is found in the cytoplasm. The protein resides in the nucleus. The protein localises to the mitochondrion. Its subcellular location is the cytoskeleton. It localises to the spindle. It is found in the microtubule organizing center. The protein resides in the centrosome. The protein localises to the chromosome. Its subcellular location is the nucleoplasm. In terms of biological role, receptor for glucocorticoids (GC). Has a dual mode of action: as a transcription factor that binds to glucocorticoid response elements (GRE), both for nuclear and mitochondrial DNA, and as a modulator of other transcription factors. Affects inflammatory responses, cellular proliferation and differentiation in target tissues. Involved in chromatin remodeling. Plays a role in rapid mRNA degradation by binding to the 5' UTR of target mRNAs and interacting with PNRC2 in a ligand-dependent manner which recruits the RNA helicase UPF1 and the mRNA-decapping enzyme DCP1A, leading to RNA decay. Could act as a coactivator for STAT5-dependent transcription upon growth hormone (GH) stimulation and could reveal an essential role of hepatic GR in the control of body growth. Mediates glucocorticoid-induced apoptosis. Promotes accurate chromosome segregation during mitosis. May act as a tumor suppressor. May play a negative role in adipogenesis through the regulation of lipolytic and antilipogenic gene expression. This chain is Glucocorticoid receptor (NR3C1), found in Ovis aries (Sheep).